Here is a 145-residue protein sequence, read N- to C-terminus: 3-dehydroquinate dehydratase (145 aa).

The active-site Proton acceptor is Tyr-23. Residues Asn-75, His-81, and Asp-88 each contribute to the substrate site. His-101 acts as the Proton donor in catalysis. Substrate contacts are provided by residues 102-103 and Arg-112; that span reads LS.

The protein belongs to the type-II 3-dehydroquinase family. As to quaternary structure, homododecamer.

It carries out the reaction 3-dehydroquinate = 3-dehydroshikimate + H2O. It functions in the pathway metabolic intermediate biosynthesis; chorismate biosynthesis; chorismate from D-erythrose 4-phosphate and phosphoenolpyruvate: step 3/7. Its function is as follows. Catalyzes a trans-dehydration via an enolate intermediate. The protein is 3-dehydroquinate dehydratase of Legionella pneumophila (strain Paris).